We begin with the raw amino-acid sequence, 588 residues long: Aspartate--tRNA ligase (588 aa).

Glu177 contributes to the L-aspartate binding site. Residues 201 to 204 are aspartate; that stretch reads QLFK. Arg223 serves as a coordination point for L-aspartate. ATP-binding positions include 223 to 225 and Gln232; that span reads RDE. His451 is an L-aspartate binding site. Glu485 provides a ligand contact to ATP. Arg492 is a binding site for L-aspartate. Residue 537–540 participates in ATP binding; sequence GLDR.

This sequence belongs to the class-II aminoacyl-tRNA synthetase family. Type 1 subfamily. In terms of assembly, homodimer.

The protein localises to the cytoplasm. It catalyses the reaction tRNA(Asp) + L-aspartate + ATP = L-aspartyl-tRNA(Asp) + AMP + diphosphate. Catalyzes the attachment of L-aspartate to tRNA(Asp) in a two-step reaction: L-aspartate is first activated by ATP to form Asp-AMP and then transferred to the acceptor end of tRNA(Asp). The chain is Aspartate--tRNA ligase from Staphylococcus aureus (strain NCTC 8325 / PS 47).